A 232-amino-acid chain; its full sequence is Small ribosomal subunit protein uS3 (232 aa).

Positions 39 to 107 (IRAFLKKKLY…EVNVNIKEER (69 aa)) constitute a KH type-2 domain. The disordered stretch occupies residues 212-232 (VQPEKTEDDAPKKTRRPRRGK). Basic and acidic residues predominate over residues 213 to 223 (QPEKTEDDAPK).

This sequence belongs to the universal ribosomal protein uS3 family. In terms of assembly, part of the 30S ribosomal subunit. Forms a tight complex with proteins S10 and S14.

In terms of biological role, binds the lower part of the 30S subunit head. Binds mRNA in the 70S ribosome, positioning it for translation. This chain is Small ribosomal subunit protein uS3, found in Campylobacter curvus (strain 525.92).